The primary structure comprises 78 residues: uncharacterized protein (78 aa).

This is an uncharacterized protein from Mycoplasma (Bacteriophage L2).